The primary structure comprises 937 residues: Putative leucine-rich repeat receptor-like serine/threonine-protein kinase At3g53590 (937 aa).

Residues 1-20 (MIPPNINVLIRSICINLVTS) form the signal peptide. Over 21-547 (LPLNFAYIFI…LLAQTSGIRT (527 aa)) the chain is Extracellular. N-linked (GlcNAc...) asparagine glycosylation is found at Asn50, Asn63, Asn90, and Asn114. LRR repeat units follow at residues 102–126 (LLYL…IGRI), 127–150 (SSLK…LGNL), 152–173 (NLNR…SFGN), 174–198 (LRSI…LSKL), 200–222 (KLVH…LAQL), 223–249 (PSLT…HFSR), 251–270 (VKLS…LSRI), and 271–294 (ENLS…KLSD). N-linked (GlcNAc...) asparagine glycans are attached at residues Asn162, Asn184, and Asn210. Asn272 and Asn295 each carry an N-linked (GlcNAc...) asparagine glycan. LRR repeat units follow at residues 296–316 (MTTI…SFSD), 317–341 (LNSL…IWQD), and 343–360 (SFEN…NFSD). 6 N-linked (GlcNAc...) asparagine glycosylation sites follow: Asn327, Asn357, Asn370, Asn413, Asn499, and Asn516. The chain crosses the membrane as a helical span at residues 548-568 (IVWMMIVAGSVVAATVLSVTA). Residues 569-937 (TLLYVRKRRE…SGFFHAVKPR (369 aa)) lie on the Cytoplasmic side of the membrane. Residues 614–886 (FDSSTLIGRG…SKVVKELEGI (273 aa)) enclose the Protein kinase domain. Residues 620–628 (IGRGSYGKV) and Lys642 contribute to the ATP site. Catalysis depends on Asp738, which acts as the Proton acceptor.

This sequence belongs to the protein kinase superfamily. Ser/Thr protein kinase family.

The protein localises to the cell membrane. The enzyme catalyses L-seryl-[protein] + ATP = O-phospho-L-seryl-[protein] + ADP + H(+). The catalysed reaction is L-threonyl-[protein] + ATP = O-phospho-L-threonyl-[protein] + ADP + H(+). This chain is Putative leucine-rich repeat receptor-like serine/threonine-protein kinase At3g53590, found in Arabidopsis thaliana (Mouse-ear cress).